The following is a 76-amino-acid chain: Small ribosomal subunit protein bS18 (76 aa).

It belongs to the bacterial ribosomal protein bS18 family. In terms of assembly, part of the 30S ribosomal subunit. Forms a tight heterodimer with protein bS6.

Functionally, binds as a heterodimer with protein bS6 to the central domain of the 16S rRNA, where it helps stabilize the platform of the 30S subunit. In Aeromonas salmonicida (strain A449), this protein is Small ribosomal subunit protein bS18.